A 393-amino-acid polypeptide reads, in one-letter code: NADH-quinone oxidoreductase subunit D 2 (393 aa).

The protein belongs to the complex I 49 kDa subunit family. In terms of assembly, NDH-1 is composed of 14 different subunits. Subunits NuoB, C, D, E, F, and G constitute the peripheral sector of the complex.

The protein localises to the cell inner membrane. It carries out the reaction a quinone + NADH + 5 H(+)(in) = a quinol + NAD(+) + 4 H(+)(out). In terms of biological role, NDH-1 shuttles electrons from NADH, via FMN and iron-sulfur (Fe-S) centers, to quinones in the respiratory chain. The immediate electron acceptor for the enzyme in this species is believed to be a menaquinone. Couples the redox reaction to proton translocation (for every two electrons transferred, four hydrogen ions are translocated across the cytoplasmic membrane), and thus conserves the redox energy in a proton gradient. The polypeptide is NADH-quinone oxidoreductase subunit D 2 (Cytophaga hutchinsonii (strain ATCC 33406 / DSM 1761 / CIP 103989 / NBRC 15051 / NCIMB 9469 / D465)).